We begin with the raw amino-acid sequence, 468 residues long: Adenosylhomocysteinase (468 aa).

Thr57, Asp132, and Glu194 together coordinate substrate. Residue Thr195–Thr197 coordinates NAD(+). 2 residues coordinate substrate: Lys224 and Asp228. NAD(+) contacts are provided by residues Asn229, Gly258–Gly263, Glu281, Asn316, Ile337–His339, and Asn382.

It belongs to the adenosylhomocysteinase family. NAD(+) serves as cofactor.

The protein localises to the cytoplasm. It catalyses the reaction S-adenosyl-L-homocysteine + H2O = L-homocysteine + adenosine. It participates in amino-acid biosynthesis; L-homocysteine biosynthesis; L-homocysteine from S-adenosyl-L-homocysteine: step 1/1. Functionally, may play a key role in the regulation of the intracellular concentration of adenosylhomocysteine. The polypeptide is Adenosylhomocysteinase (Methylobacterium sp. (strain 4-46)).